Reading from the N-terminus, the 814-residue chain is DNA replication licensing factor Mcm6 (814 aa).

Residues C152–C179 form a C4-type zinc finger. Residues L339–I545 form the MCM domain. Residues S392, T393, A394, K395, S396, and N497 each contribute to the ATP site. The Arginine finger signature appears at S521 to D524. Residues R612 and E615 each coordinate ADP. A disordered region spans residues D656–A696. The segment covering L659–E679 has biased composition (acidic residues).

It belongs to the MCM family. Component of the Mcm2-7 complex. The complex forms a toroidal hexameric ring with the proposed subunit order Mcm2-Mcm6-Mcm4-Mcm7-Mcm3-Mcm5 (By simililarity). The heterodimers of Mcm4/Mcm6 and Mcm3/Mcm5 interact with Mcm2 and Mcm7.

It localises to the nucleus. The catalysed reaction is ATP + H2O = ADP + phosphate + H(+). In terms of biological role, acts as a component of the MCM2-7 complex (MCM complex) which is the replicative helicase essential for 'once per cell cycle' DNA replication initiation and elongation in eukaryotic cells. Core component of CDC45-MCM-GINS (CMG) helicase, the molecular machine that unwinds template DNA during replication, and around which the replisome is built. The active ATPase sites in the MCM2-7 ring are formed through the interaction surfaces of two neighboring subunits such that a critical structure of a conserved arginine finger motif is provided in trans relative to the ATP-binding site of the Walker A box of the adjacent subunit. The six ATPase active sites, however, are likely to contribute differentially to the complex helicase activity. In Anopheles gambiae (African malaria mosquito), this protein is DNA replication licensing factor Mcm6.